Here is a 372-residue protein sequence, read N- to C-terminus: MNSGIDLQASFIESLNQLGIPSGAAKALWIPFPSFLMIIGATVGVLVVVWLERKISAAAQQRIGPEYAGPLGVLQPVADGIKLVFKEDVIPAKADPWLFTLGPVLVVLPVFVSYLIVPFGQNLVITDLNVGIFFWIALSSIAPIGLLMAGYASNNKYSLLGGLRAAAQSISYEIPLALSVLAIVMMSNSLSTIDIVEQQSGYGILGWNIWRQPVGFFIFWIAALAECERLPFDLPEAEEEIVAGYQTEYAGMKFALFYLGSYVNLVLSALVFAILYLGGWEFPVPLDKLAEWLGVSEDSSWLQVITASLGITMTVLKAYFLVFIAVLMRWTVPRVRIDQLLDLGWKFLLPVSLVNLLLTAALKLAFPVAFGG.

Helical transmembrane passes span 29 to 49 (WIPF…LVVV), 97 to 117 (WLFT…YLIV), 130 to 150 (VGIF…LMAG), 176 to 196 (LALS…IDIV), 204 to 224 (ILGW…IAAL), 254 to 274 (FALF…VFAI), 308 to 328 (SLGI…AVLM), and 347 to 367 (FLLP…LAFP).

The protein belongs to the complex I subunit 1 family. As to quaternary structure, NDH-1 is composed of at least 11 different subunits.

The protein resides in the cellular thylakoid membrane. The enzyme catalyses a plastoquinone + NADH + (n+1) H(+)(in) = a plastoquinol + NAD(+) + n H(+)(out). It carries out the reaction a plastoquinone + NADPH + (n+1) H(+)(in) = a plastoquinol + NADP(+) + n H(+)(out). Functionally, NDH-1 shuttles electrons from an unknown electron donor, via FMN and iron-sulfur (Fe-S) centers, to quinones in the respiratory and/or the photosynthetic chain. The immediate electron acceptor for the enzyme in this species is believed to be plastoquinone. Couples the redox reaction to proton translocation, and thus conserves the redox energy in a proton gradient. This is NAD(P)H-quinone oxidoreductase subunit 1 from Crocosphaera subtropica (strain ATCC 51142 / BH68) (Cyanothece sp. (strain ATCC 51142)).